A 240-amino-acid polypeptide reads, in one-letter code: RNA polymerase sigma factor SigI (240 aa).

The short motif at 56–69 is the Polymerase core binding element; sequence DEYSIGLFAFNEAI. The H-T-H motif DNA-binding region spans 194–213; sequence LKHIEPRVRVSRKTLERHRK.

Belongs to the sigma-70 factor family. SigI subfamily. In terms of assembly, interacts with RsgI.

The protein resides in the cytoplasm. Negatively regulated by the anti-sigma-I factor RsgI. Its function is as follows. Sigma factors are initiation factors that promote the attachment of RNA polymerase to specific initiation sites and are then released. This sigma factor contributes to both stress response and virulence gene expression. This Bacillus anthracis protein is RNA polymerase sigma factor SigI.